Reading from the N-terminus, the 176-residue chain is Methylated-DNA--protein-cysteine methyltransferase (176 aa).

The Nucleophile; methyl group acceptor role is filled by cysteine 142.

Belongs to the MGMT family.

It localises to the cytoplasm. It carries out the reaction a 6-O-methyl-2'-deoxyguanosine in DNA + L-cysteinyl-[protein] = S-methyl-L-cysteinyl-[protein] + a 2'-deoxyguanosine in DNA. The enzyme catalyses a 4-O-methyl-thymidine in DNA + L-cysteinyl-[protein] = a thymidine in DNA + S-methyl-L-cysteinyl-[protein]. Involved in the cellular defense against the biological effects of O6-methylguanine (O6-MeG) and O4-methylthymine (O4-MeT) in DNA. Repairs the methylated nucleobase in DNA by stoichiometrically transferring the methyl group to a cysteine residue in the enzyme. This is a suicide reaction: the enzyme is irreversibly inactivated. The polypeptide is Methylated-DNA--protein-cysteine methyltransferase (Methanothermobacter thermautotrophicus (strain ATCC 29096 / DSM 1053 / JCM 10044 / NBRC 100330 / Delta H) (Methanobacterium thermoautotrophicum)).